The primary structure comprises 65 residues: Large ribosomal subunit protein bL33m (65 aa).

A mitochondrion-targeting transit peptide spans 1-8; that stretch reads MFLSAVTF.

The protein belongs to the bacterial ribosomal protein bL33 family. In terms of assembly, component of the mitochondrial ribosome large subunit (39S) which comprises a 16S rRNA and about 50 distinct proteins.

It is found in the mitochondrion. In Bos taurus (Bovine), this protein is Large ribosomal subunit protein bL33m (MRPL33).